A 792-amino-acid polypeptide reads, in one-letter code: Probable exo-1,4-beta-xylosidase xlnD (792 aa).

A signal peptide spans methionine 1 to alanine 20. N-linked (GlcNAc...) asparagine glycosylation is found at asparagine 23, asparagine 87, asparagine 118, asparagine 142, and asparagine 246. The active site involves aspartate 310. Asparagine 326, asparagine 385, asparagine 404, asparagine 440, asparagine 477, asparagine 518, asparagine 679, and asparagine 701 each carry an N-linked (GlcNAc...) asparagine glycan.

Belongs to the glycosyl hydrolase 3 family.

It is found in the secreted. The enzyme catalyses Hydrolysis of (1-&gt;4)-beta-D-xylans, to remove successive D-xylose residues from the non-reducing termini.. The protein operates within glycan degradation; xylan degradation. In terms of biological role, xylan 1,4-beta-xylosidase involved in the hydrolysis of xylan, a major structural heterogeneous polysaccharide found in plant biomass representing the second most abundant polysaccharide in the biosphere, after cellulose. The sequence is that of Probable exo-1,4-beta-xylosidase xlnD (xlnD) from Aspergillus fumigatus (strain ATCC MYA-4609 / CBS 101355 / FGSC A1100 / Af293) (Neosartorya fumigata).